Reading from the N-terminus, the 98-residue chain is DNA-binding protein Fis (98 aa).

Residues 74–93 (QTRAAVMMGINRGTLRKKLK) constitute a DNA-binding region (H-T-H motif).

Belongs to the transcriptional regulatory Fis family. In terms of assembly, homodimer.

Its function is as follows. Activates ribosomal RNA transcription. Plays a direct role in upstream activation of rRNA promoters. The sequence is that of DNA-binding protein Fis from Aeromonas hydrophila subsp. hydrophila (strain ATCC 7966 / DSM 30187 / BCRC 13018 / CCUG 14551 / JCM 1027 / KCTC 2358 / NCIMB 9240 / NCTC 8049).